The chain runs to 897 residues: Cytokine receptor common subunit beta (897 aa).

Residues 1 to 16 (MVLAQGLLSMALLALC) form the signal peptide. Residues 17-443 (WERSLAGAEE…WDTESVLPMW (427 aa)) are Extracellular-facing. C35 and C45 are oxidised to a cystine. N-linked (GlcNAc...) asparagine glycosylation occurs at N58. 2 disulfide bridges follow: C75/C96 and C86/C91. Residues 133–240 (PPEPRDLQIS…PEVCWDSQPG (108 aa)) enclose the Fibronectin type-III 1 domain. N191 carries N-linked (GlcNAc...) asparagine glycosylation. Disulfide bonds link C250/C260 and C289/C306. The Fibronectin type-III 2 domain maps to 339–436 (QMAPPSLNVT…EWSEARSWDT (98 aa)). N-linked (GlcNAc...) asparagine glycosylation is present at N346. Residues 425–429 (WSEWS) carry the WSXWS motif motif. The chain crosses the membrane as a helical span at residues 444–460 (VLALIVIFLTIAVLLAL). At 461–897 (RFCGIYGYRL…WEVNKPGEVC (437 aa)) the chain is on the cytoplasmic side. A Box 1 motif motif is present at residues 474–482 (WEEKIPNPS). Disordered regions lie at residues 498–517 (GSMS…WGSR), 532–630 (SEVS…EYLC), 648–812 (PGQA…QPEG), and 830–849 (PGPL…PEIK). The segment covering 564–574 (EQPPSPQPGPP) has biased composition (pro residues). Positions 723–752 (SGASSVSLVPSLGLPSDQTPSLCPGLASGP) are enriched in low complexity. Y766 is subject to Phosphotyrosine. Low complexity predominate over residues 830-840 (PGPLSLRSKPS).

It belongs to the type I cytokine receptor family. Type 4 subfamily. In terms of assembly, heterodimer of an alpha and a beta subunit. The beta subunit is common to the IL3, IL5 and GM-CSF receptors. The signaling GM-CSF receptor complex is a dodecamer of two head-to-head hexamers of two alpha, two beta, and two ligand subunits. Interacts with TMEM102; this interaction occurs preferentially in the absence of CSF2. Interacts with FCER1G; this interaction is direct. Interacts with LYN. Interacts with JAK1. Post-translationally, may be phosphorylated by LYN.

The protein localises to the membrane. In terms of biological role, cell surface receptor that plays a role in immune response and controls the production and differentiation of hematopoietic progenitor cells into lineage-restricted cells. Acts by forming an heterodimeric receptor through interaction with different partners such as IL3RA, IL5RA or CSF2RA. In turn, participates in various signaling pathways including interleukin-3, interleukin-5 and granulocyte-macrophage colony-stimulating factor/CSF2 pathways. In unstimulated conditions, interacts constitutively with JAK1 and ligand binding leads to JAK1 stimulation and subsequent activation of the JAK-STAT pathway. The sequence is that of Cytokine receptor common subunit beta (CSF2RB) from Homo sapiens (Human).